A 138-amino-acid polypeptide reads, in one-letter code: ER-derived vesicles protein ERV14 (138 aa).

The Cytoplasmic segment spans residues 2–6 (GAWLF). A helical membrane pass occupies residues 7–27 (ILAVVVNCINLFGQVHFTILY). Topologically, residues 28–52 (ADLEADYINPIELCSKVNKLITPEA) are extracellular. Residues 53–73 (ALHGALSLLFLLNGYWFVFLL) traverse the membrane as a helical segment. Residues 74–111 (NLPVLAYNLNKIYNKVQLLDATEIFRTLGKHKRESFLK) are Cytoplasmic-facing. A helical membrane pass occupies residues 112–132 (LGFHLLMFFFYLYRMIMALIA). Topologically, residues 133 to 138 (ESGDDF) are extracellular.

The protein belongs to the cornichon family.

It is found in the endoplasmic reticulum membrane. The protein localises to the golgi apparatus membrane. Functionally, could regulate export of the bud site and axial growth sites selection protein AXL2 and possibly other secretory proteins from the endoplasmic reticulum in COPII-coated vesicles. Seems to be required for axial budding pattern in haploid cells. This chain is ER-derived vesicles protein ERV14 (ERV14), found in Saccharomyces cerevisiae (strain ATCC 204508 / S288c) (Baker's yeast).